The following is an 81-amino-acid chain: UPF0181 protein Spro_2806 (81 aa).

The disordered stretch occupies residues 43–81 (EKHQGDQVSVMFDDEDDDEEYQERPDDQADDDSEEDENY). Acidic residues-rich tracts occupy residues 54 to 63 (FDDEDDDEEY) and 70 to 81 (QADDDSEEDENY).

Belongs to the UPF0181 family.

The chain is UPF0181 protein Spro_2806 from Serratia proteamaculans (strain 568).